Reading from the N-terminus, the 323-residue chain is Methionyl-tRNA formyltransferase (323 aa).

113-116 (SLLP) lines the (6S)-5,6,7,8-tetrahydrofolate pocket.

This sequence belongs to the Fmt family.

The enzyme catalyses L-methionyl-tRNA(fMet) + (6R)-10-formyltetrahydrofolate = N-formyl-L-methionyl-tRNA(fMet) + (6S)-5,6,7,8-tetrahydrofolate + H(+). In terms of biological role, attaches a formyl group to the free amino group of methionyl-tRNA(fMet). The formyl group appears to play a dual role in the initiator identity of N-formylmethionyl-tRNA by promoting its recognition by IF2 and preventing the misappropriation of this tRNA by the elongation apparatus. This chain is Methionyl-tRNA formyltransferase, found in Nitrosococcus oceani (strain ATCC 19707 / BCRC 17464 / JCM 30415 / NCIMB 11848 / C-107).